Here is a 372-residue protein sequence, read N- to C-terminus: Homoserine O-acetyltransferase (372 aa).

The AB hydrolase-1 domain occupies 43–353 (NAILIFHALT…DKGHDSFLLK (311 aa)). The active-site Nucleophile is the Ser148. Arg218 contacts substrate. Active-site residues include Asp314 and His347. Asp348 is a binding site for substrate.

Belongs to the AB hydrolase superfamily. MetX family. Homodimer.

Its subcellular location is the cytoplasm. It carries out the reaction L-homoserine + acetyl-CoA = O-acetyl-L-homoserine + CoA. It functions in the pathway amino-acid biosynthesis; L-methionine biosynthesis via de novo pathway; O-acetyl-L-homoserine from L-homoserine: step 1/1. In terms of biological role, transfers an acetyl group from acetyl-CoA to L-homoserine, forming acetyl-L-homoserine. This Pelagibacter ubique (strain HTCC1062) protein is Homoserine O-acetyltransferase.